The following is a 306-amino-acid chain: uncharacterized protein (306 aa).

Residues 277-306 (TEIIQNYKIANELKKEKQQNKKKNSIELEE) adopt a coiled-coil conformation.

This is an uncharacterized protein from Saccharolobus islandicus (Sulfolobus islandicus).